A 510-amino-acid polypeptide reads, in one-letter code: Cytochrome P450 11B2, mitochondrial (510 aa).

Residues 1 to 34 (MGACDNDFIELHSRVTADVWLARPWQCLHRTRAL) constitute a mitochondrion transit peptide. Phe-391 is a 21-hydroxyprogesterone binding site. Cys-457 contributes to the heme binding site.

The protein belongs to the cytochrome P450 family. Requires heme as cofactor. As to expression, adrenal cortex.

Its subcellular location is the mitochondrion inner membrane. The catalysed reaction is a steroid + 2 reduced [adrenodoxin] + O2 + 2 H(+) = an 11beta-hydroxysteroid + 2 oxidized [adrenodoxin] + H2O. It carries out the reaction 21-hydroxyprogesterone + 2 reduced [adrenodoxin] + O2 + 2 H(+) = corticosterone + 2 oxidized [adrenodoxin] + H2O. It catalyses the reaction corticosterone + 2 reduced [adrenodoxin] + O2 + 2 H(+) = 18-hydroxycorticosterone + 2 oxidized [adrenodoxin] + H2O. The enzyme catalyses 18-hydroxycorticosterone + 2 reduced [adrenodoxin] + O2 + 2 H(+) = aldosterone + 2 oxidized [adrenodoxin] + 2 H2O. The catalysed reaction is 11-deoxycortisol + 2 reduced [adrenodoxin] + O2 + 2 H(+) = cortisol + 2 oxidized [adrenodoxin] + H2O. It carries out the reaction cortisol + 2 reduced [adrenodoxin] + O2 + 2 H(+) = 18-hydroxycortisol + 2 oxidized [adrenodoxin] + H2O. It catalyses the reaction 21-hydroxyprogesterone + 2 reduced [adrenodoxin] + O2 + 2 H(+) = 18-hydroxy-11-deoxycorticosterone + 2 oxidized [adrenodoxin] + H2O. The enzyme catalyses 18-hydroxycortisol + 2 reduced [adrenodoxin] + O2 + 2 H(+) = 18-oxocortisol + 2 oxidized [adrenodoxin] + 2 H2O. It functions in the pathway steroid biosynthesis. In terms of biological role, a cytochrome P450 monooxygenase that catalyzes the biosynthesis of aldosterone, the main mineralocorticoid responsible for salt and water homeostasis. Catalyzes three sequential oxidative reactions of 11-deoxycorticosterone (21-hydroxyprogesterone), namely 11-beta hydroxylation, followed by two successive oxidations at C18 yielding 18-hydroxy and then 18-oxo intermediates (that do not leave the enzyme active site during the consecutive hydroxylation reactions), and end with the formation of aldosterone. Can also produce 18-hydroxycortisol and 18-oxocortisol, derived from successive oxidations of cortisol at C18, normally found at very low levels, but significantly increased in primary aldosteronism, the most common form of secondary hypertension. Mechanistically, uses molecular oxygen inserting one oxygen atom into a substrate and reducing the second into a water molecule. Two electrons are provided by NADPH via a two-protein mitochondrial transfer system comprising flavoprotein FDXR (adrenodoxin/ferredoxin reductase) and nonheme iron-sulfur protein FDX1 or FDX2 (adrenodoxin/ferredoxin). Could also be involved in the androgen metabolic pathway. The sequence is that of Cytochrome P450 11B2, mitochondrial (Cyp11b2) from Rattus norvegicus (Rat).